A 394-amino-acid chain; its full sequence is Na(+)/H(+) antiporter NhaA (394 aa).

11 helical membrane-spanning segments follow: residues 11–31 (LEAASGILLLVSALLAMIFAN), 59–79 (LLMWVNDGFMAVFFILVGMEV), 95–115 (IFPAVAALGGMIIPALVYWFI), 125–145 (GWAIPMATDIAFALGIVALLS), 155–175 (FLLALAIIDDLGAIIVIALFF), 177–197 (HEMSMQALTIASIAIVILVAM), 203–220 (TGLINYAIIGTILWASVL), 254–274 (ALAPWCSFAILPLFAFSNAGV), 296–316 (LIIGKPVGVFLFSYVAVLLGI), 328–348 (IFAIAVLCGIGFTMSMFIAGL), and 365–385 (LGILMGTFVAAIIGYFLLKIT).

This sequence belongs to the NhaA Na(+)/H(+) (TC 2.A.33) antiporter family.

Its subcellular location is the cell inner membrane. The enzyme catalyses Na(+)(in) + 2 H(+)(out) = Na(+)(out) + 2 H(+)(in). Na(+)/H(+) antiporter that extrudes sodium in exchange for external protons. The polypeptide is Na(+)/H(+) antiporter NhaA (Actinobacillus pleuropneumoniae serotype 7 (strain AP76)).